A 443-amino-acid polypeptide reads, in one-letter code: Tubulin beta-1/beta-2 chain (443 aa).

GTP contacts are provided by Gln11, Glu69, Ser138, Gly142, Thr143, Gly144, Asn204, and Asn226. Glu69 is a Mg(2+) binding site. Positions 424 to 443 are disordered; the sequence is QYQDASAEEEGEFEGEEEEA. The segment covering 429–443 has biased composition (acidic residues); that stretch reads SAEEEGEFEGEEEEA.

It belongs to the tubulin family. Dimer of alpha and beta chains. A typical microtubule is a hollow water-filled tube with an outer diameter of 25 nm and an inner diameter of 15 nM. Alpha-beta heterodimers associate head-to-tail to form protofilaments running lengthwise along the microtubule wall with the beta-tubulin subunit facing the microtubule plus end conferring a structural polarity. Microtubules usually have 13 protofilaments but different protofilament numbers can be found in some organisms and specialized cells. Mg(2+) is required as a cofactor.

It localises to the cytoplasm. The protein localises to the cytoskeleton. In terms of biological role, tubulin is the major constituent of microtubules, a cylinder consisting of laterally associated linear protofilaments composed of alpha- and beta-tubulin heterodimers. Microtubules grow by the addition of GTP-tubulin dimers to the microtubule end, where a stabilizing cap forms. Below the cap, tubulin dimers are in GDP-bound state, owing to GTPase activity of alpha-tubulin. This Chlamydomonas reinhardtii (Chlamydomonas smithii) protein is Tubulin beta-1/beta-2 chain (TUBB1).